The sequence spans 124 residues: Small ribosomal subunit protein uS12 (124 aa).

A disordered region spans residues 105-124 (SGVNDRRQGRSKYGAKRPKS). Residues 113–124 (GRSKYGAKRPKS) show a composition bias toward basic residues.

It belongs to the universal ribosomal protein uS12 family. As to quaternary structure, part of the 30S ribosomal subunit. Contacts proteins S8 and S17. May interact with IF1 in the 30S initiation complex.

Its function is as follows. With S4 and S5 plays an important role in translational accuracy. Interacts with and stabilizes bases of the 16S rRNA that are involved in tRNA selection in the A site and with the mRNA backbone. Located at the interface of the 30S and 50S subunits, it traverses the body of the 30S subunit contacting proteins on the other side and probably holding the rRNA structure together. The combined cluster of proteins S8, S12 and S17 appears to hold together the shoulder and platform of the 30S subunit. In Idiomarina loihiensis (strain ATCC BAA-735 / DSM 15497 / L2-TR), this protein is Small ribosomal subunit protein uS12.